Here is a 113-residue protein sequence, read N- to C-terminus: Putative pterin-4-alpha-carbinolamine dehydratase (113 aa).

Belongs to the pterin-4-alpha-carbinolamine dehydratase family.

It carries out the reaction (4aS,6R)-4a-hydroxy-L-erythro-5,6,7,8-tetrahydrobiopterin = (6R)-L-erythro-6,7-dihydrobiopterin + H2O. The sequence is that of Putative pterin-4-alpha-carbinolamine dehydratase from Legionella pneumophila (strain Lens).